Here is a 379-residue protein sequence, read N- to C-terminus: MTISDVPTQTLPAEGEVRLVDIGSLRLESGAVIDNVCIALQRWGELSPTRDNVVMVLHALTGDSHVTGPAGPGHSTPGWWDGMVGPGAPIDTNRWCAVATNVLGGCRGSTGPSSLARDGKPWGSRFPLISVRDQVEADMAALAALGITQVAAVVGGSMGGARALEWIVGHPDRVRSALLLAVGARATADQIGTQTTQIAAIKADPNWRNGDYHETGCRPEAGLKVARRFAHLTYRGEIELDSRFANDGQGGEDPADGGRYAIQSYLEHQGDKLLARFDAGSYVILTEALSRHDVGRGRDGIHAALRGCPVPVVVGGITSDRLYPLRLQQELADLLPGCAGLEVVDSIRGHDGFLVESEAVGELIHKTLRLAEDRSSRPW.

In terms of domain architecture, AB hydrolase-1 spans 52 to 356; that stretch reads NVVMVLHALT…IRGHDGFLVE (305 aa). The active-site Nucleophile is the serine 157. Residue arginine 227 participates in substrate binding. Active-site residues include aspartate 320 and histidine 350. Substrate is bound at residue aspartate 351.

This sequence belongs to the AB hydrolase superfamily. MetX family. In terms of assembly, homodimer.

It localises to the cytoplasm. The enzyme catalyses L-homoserine + acetyl-CoA = O-acetyl-L-homoserine + CoA. The protein operates within amino-acid biosynthesis; L-methionine biosynthesis via de novo pathway; O-acetyl-L-homoserine from L-homoserine: step 1/1. In terms of biological role, transfers an acetyl group from acetyl-CoA to L-homoserine, forming acetyl-L-homoserine. In Mycobacterium ulcerans (strain Agy99), this protein is Homoserine O-acetyltransferase.